A 239-amino-acid chain; its full sequence is Pimeloyl-[acyl-carrier protein] methyl ester esterase (239 aa).

Substrate contacts are provided by residues tryptophan 20, 77–78, and 138–142; these read SM and FISLQ. Residue serine 77 is the Nucleophile of the active site. Catalysis depends on residues aspartate 192 and histidine 220. Substrate is bound at residue histidine 220.

This sequence belongs to the AB hydrolase superfamily. Carboxylesterase BioH family. As to quaternary structure, monomer.

It is found in the cytoplasm. The enzyme catalyses 6-carboxyhexanoyl-[ACP] methyl ester + H2O = 6-carboxyhexanoyl-[ACP] + methanol + H(+). It functions in the pathway cofactor biosynthesis; biotin biosynthesis. Its function is as follows. The physiological role of BioH is to remove the methyl group introduced by BioC when the pimeloyl moiety is complete. It allows to synthesize pimeloyl-ACP via the fatty acid synthetic pathway through the hydrolysis of the ester bonds of pimeloyl-ACP esters. This Legionella pneumophila (strain Paris) protein is Pimeloyl-[acyl-carrier protein] methyl ester esterase.